The primary structure comprises 82 residues: Omega-conotoxin-like 9 (82 aa).

The signal sequence occupies residues 1 to 22; it reads MKLTCMMIAAVLFLTTWTFVTA. The propeptide occupies 23–51; sequence DDSRYGLKNLFPKARHEMKNPEASKLNKR. 3 cysteine pairs are disulfide-bonded: Cys54–Cys69, Cys61–Cys73, and Cys68–Cys77.

The protein belongs to the conotoxin O1 superfamily. As to expression, expressed by the venom duct.

Its subcellular location is the secreted. In terms of biological role, omega-conotoxins act at presynaptic membranes, they bind and block voltage-gated calcium channels (Cav). This is Omega-conotoxin-like 9 from Conus striatus (Striated cone).